The sequence spans 514 residues: Maturase K (514 aa).

It belongs to the intron maturase 2 family. MatK subfamily.

Its subcellular location is the plastid. The protein resides in the chloroplast. Usually encoded in the trnK tRNA gene intron. Probably assists in splicing its own and other chloroplast group II introns. This chain is Maturase K, found in Dioon spinulosum (Gum palm).